A 72-amino-acid polypeptide reads, in one-letter code: Translation initiation factor IF-1 (72 aa).

Positions 1 to 72 constitute an S1-like domain; sequence MAKKDVIELE…TRGRITWRKK (72 aa).

It belongs to the IF-1 family. As to quaternary structure, component of the 30S ribosomal translation pre-initiation complex which assembles on the 30S ribosome in the order IF-2 and IF-3, IF-1 and N-formylmethionyl-tRNA(fMet); mRNA recruitment can occur at any time during PIC assembly.

It localises to the cytoplasm. Its function is as follows. One of the essential components for the initiation of protein synthesis. Stabilizes the binding of IF-2 and IF-3 on the 30S subunit to which N-formylmethionyl-tRNA(fMet) subsequently binds. Helps modulate mRNA selection, yielding the 30S pre-initiation complex (PIC). Upon addition of the 50S ribosomal subunit IF-1, IF-2 and IF-3 are released leaving the mature 70S translation initiation complex. The sequence is that of Translation initiation factor IF-1 from Clostridioides difficile (strain 630) (Peptoclostridium difficile).